Here is a 385-residue protein sequence, read N- to C-terminus: Putative type I restriction enzyme specificity subunit S.HindORF215P (385 aa).

Belongs to the type-I restriction system S methylase family.

Its function is as follows. A putative specificity subunit for a type I restriction enzyme; the corresponding endonuclease and methylase subunits have multiple frameshifts and are probably not expressed. The protein is Putative type I restriction enzyme specificity subunit S.HindORF215P of Haemophilus influenzae (strain ATCC 51907 / DSM 11121 / KW20 / Rd).